The following is a 260-amino-acid chain: Putative ABC transporter ATP-binding protein (260 aa).

The ABC transporter domain occupies 4 to 243 (ISMKNVTLKK…QVLENFYESP (240 aa)). Residue 36–43 (GLNGSGKT) coordinates ATP.

The protein belongs to the ABC transporter superfamily.

The chain is Putative ABC transporter ATP-binding protein (abcX) from Streptococcus mutans serotype c (strain ATCC 700610 / UA159).